Here is an 854-residue protein sequence, read N- to C-terminus: Lysine-specific demethylase 3 (854 aa).

Positions 64–88 (QRVQQEEESLGQVPPLTEEEQQRHD) are disordered. A JmjC domain is found at 601–806 (LRTGNLNIAS…HCYHLTHEFR (206 aa)). Fe cation contacts are provided by His643, Asp645, and His774.

The protein belongs to the JHDM2-like histone demethylase family. The cofactor is Fe(2+). Expressed in neurons close to the dorsal lateral neurons involved in circadian rhythm.

It is found in the nucleus. It localises to the cytoplasm. It catalyses the reaction N(6),N(6)-dimethyl-L-lysyl(9)-[histone H3] + 2 2-oxoglutarate + 2 O2 = L-lysyl(9)-[histone H3] + 2 formaldehyde + 2 succinate + 2 CO2. In terms of biological role, histone demethylase that specifically demethylates 'Lys-10' of histone H3 (H3K9), thereby playing a central role in histone code. Demethylation of Lys residue generates formaldehyde and succinate. Probably involved in regulation of chromatin structure, promoting expansion of euchromatin. Negatively regulates rhino-dependent piRNA production capacity of several genomic regions; may help define the frontiers of piRNA clusters by regulating histone methylation levels. May be involved in regulation of behavior and circadian rhythms. The chain is Lysine-specific demethylase 3 from Drosophila melanogaster (Fruit fly).